We begin with the raw amino-acid sequence, 435 residues long: DEAD-box ATP-dependent RNA helicase CshB (435 aa).

A Q motif motif is present at residues 5-33 (SRFDQFGFQPFIGLAIDKLGFYEPTEVQQ). The 173-residue stretch at 36–208 (IPGILKGESI…SKYMENPRYE (173 aa)) folds into the Helicase ATP-binding domain. ATP is bound at residue 49–56 (SQTGTGKT). Positions 156-159 (DEAD) match the DEAD box motif. The region spanning 235–378 (LLKNVLVGSQ…HVDWKNKEFV (144 aa)) is the Helicase C-terminal domain. A disordered region spans residues 383 to 435 (RNRRAKREAKRETADPREIGMRKKAKQKGKPNYKKKINYKMNEIKRRERRKKR). The segment covering 391–403 (AKRETADPREIGM) has biased composition (basic and acidic residues). Residues 404–420 (RKKAKQKGKPNYKKKIN) are compositionally biased toward basic residues.

It belongs to the DEAD box helicase family. CshB subfamily.

It localises to the cytoplasm. The enzyme catalyses ATP + H2O = ADP + phosphate + H(+). Its function is as follows. DEAD-box RNA helicase involved in cold tolerance, motility, and tolerance to heat, alkali and oxidative stress. This chain is DEAD-box ATP-dependent RNA helicase CshB, found in Listeria monocytogenes serovar 1/2a (strain ATCC BAA-679 / EGD-e).